The primary structure comprises 138 residues: Basic phospholipase A2 Tbo-G6D49 (138 aa).

A signal peptide spans 1 to 16 (MRTLWIMAVLLVGVEG). Intrachain disulfides connect cysteine 42/cysteine 131, cysteine 44/cysteine 60, cysteine 59/cysteine 111, cysteine 65/cysteine 138, cysteine 66/cysteine 104, cysteine 73/cysteine 97, and cysteine 91/cysteine 102. Residues tyrosine 43, glycine 45, and glycine 47 each contribute to the Ca(2+) site. The active site involves histidine 63. Aspartate 64 contributes to the Ca(2+) binding site. The active site involves aspartate 105.

As to quaternary structure, monomer. The cofactor is Ca(2+). As to expression, expressed by the venom gland.

The protein localises to the secreted. It carries out the reaction a 1,2-diacyl-sn-glycero-3-phosphocholine + H2O = a 1-acyl-sn-glycero-3-phosphocholine + a fatty acid + H(+). Its function is as follows. Snake venom phospholipase A2 (PLA2) that impairs hemostasis. It weakly inhibits ADP-induced platelet aggregation when tested on platelet rich plasma from human and rabbit blood (15-25% of inhibition at 5-10 ug of enzyme), and dose-dependently inhibits blood coagulation, possibly by inhibiting thrombin activation. Exhibits strong hydrolytic activities toward L-dipalmitoyl phosphatidylcholine. PLA2 catalyzes the calcium-dependent hydrolysis of the 2-acyl groups in 3-sn-phosphoglycerides. The sequence is that of Basic phospholipase A2 Tbo-G6D49 from Craspedocephalus borneensis (Borneo pit viper).